Reading from the N-terminus, the 3977-residue chain is Hybrid PKS-NRPS synthetase gkaA (3977 aa).

A Ketosynthase family 3 (KS3) domain is found at 4 to 441 (EEPIAVIGSG…GTNAHVILEN (438 aa)). Residues Cys177, His316, and His361 each act as for beta-ketoacyl synthase activity in the active site. The 317-residue stretch at 551-867 (VFTGQGAQWP…TGVIHRGKND (317 aa)) folds into the Malonyl-CoA:ACP transacylase (MAT) domain. The segment at 937–1072 (NPLLGTRTTD…GRITVTLGES (136 aa)) is N-terminal hotdog fold. The 305-residue stretch at 937–1241 (NPLLGTRTTD…VVAFSEATAD (305 aa)) folds into the PKS/mFAS DH domain. His969 acts as the Proton acceptor; for dehydratase activity in catalysis. Residues 1087–1241 (LVSIPQDRFY…VVAFSEATAD (155 aa)) form a C-terminal hotdog fold region. Residue Asp1147 is the Proton donor; for dehydratase activity of the active site. The tract at residues 1286 to 1580 (YMKKTVEEFP…FSGIDSSTPE (295 aa)) is methyltransferase (cMeT) domain. The Ketoreductase (KR) domain maps to 2128-2301 (TYVLFGLTSD…AASILHIGAV (174 aa)). One can recognise a Carrier 1 domain in the interval 2409 to 2490 (SEVFEIISGA…QLLEYAIDNM (82 aa)). O-(pantetheine 4'-phosphoryl)serine is present on Ser2450. The tract at residues 2497-2542 (HSNGEQGTVSDSGSTNIQLTPASTPSVPSVNLASDSTGSSQVGEDV) is disordered. Residues 2499–2538 (NGEQGTVSDSGSTNIQLTPASTPSVPSVNLASDSTGSSQV) show a composition bias toward polar residues. The condensation stretch occupies residues 2584–3018 (EKIIPMSPGQ…LKDISLFSKE (435 aa)). Residues 3048 to 3437 (IAEHPDTISI…GALEILGRID (390 aa)) are adenylation. The region spanning 3552-3632 (FSLTPTEDKL…AMASLITPAS (81 aa)) is the Carrier 2 domain. Position 3592 is an O-(pantetheine 4'-phosphoryl)serine (Ser3592). In terms of domain architecture, Thioester reductase (TE) spans 3672–3890 (LTGATGFLGH…FVDLVSVQNV (219 aa)).

It in the C-terminal section; belongs to the NRP synthetase family. Pantetheine 4'-phosphate is required as a cofactor.

It participates in mycotoxin biosynthesis. Its function is as follows. Hybrid PKS-NRPS synthetase; part of the gene cluster that mediates the biosynthesis of GKK1032, fungal natural products containing a macrocyclic para-cyclophane connected to a decahydrofluorene ring system that show potent antitumor activities. Within the pathway, the PKS-NRPS gkaA, with the help of the trans-enoyl reductase gkaC, synthesize the polyketide-tyrosyl acyl thioester product which can be reductively off-loaded by the terminal reductase (R) domain in gkaA. The PKS module of gkaA acts in combination with the trans-acting enoyl reductase gkaC to produce a methylated polyketide attached to the ACP domain. In parallel, the adenylation (A) domain of the NRPS module activated L-tyrosine, which is then transferred to the ACP domain. The condensation (C) domain subsequently links this group to the polyketide chain, forming an enzyme-bound amide. The alpha/beta hydrolase gkaG is then required to catalyze the subsequent Knoevenagel condensation that affords the 3-pyrrolin-2-one ring, whereas the three proteins gkaB, gkadX and gkaZ then function synergistically to form the cyclophane. In Penicillium citrinum, this protein is Hybrid PKS-NRPS synthetase gkaA.